A 236-amino-acid polypeptide reads, in one-letter code: Probable transcriptional regulatory protein UUR10_0292 (236 aa).

The protein belongs to the TACO1 family.

The protein resides in the cytoplasm. This Ureaplasma urealyticum serovar 10 (strain ATCC 33699 / Western) protein is Probable transcriptional regulatory protein UUR10_0292.